Here is an 877-residue protein sequence, read N- to C-terminus: Clumping factor B (877 aa).

An N-terminal signal peptide occupies residues 1 to 44; sequence MKKRIDYLSNKQNKYSIRRFTVGTTSVIVGATILFGIGNHQAQA. The YSIRK-G/S signaling motif signature appears at 15 to 26; sequence YSIRRFTVGTTS. Composition is skewed to polar residues over residues 44–61 and 68–95; these read ASEQ…NASA and MIET…NVDS. Positions 44–192 are disordered; the sequence is ASEQSNDTTQ…QGTSKPSVRT (149 aa). The segment at 45–542 is ligand binding A region; sequence SEQSNDTTQS…GSADGDSAVN (498 aa). Low complexity predominate over residues 96 to 119; it reads TTKPMSTQTSNTTTTEPASTNETP. Over residues 120–189 the composition is skewed to polar residues; sequence QPTAIKNQAT…SNAQGTSKPS (70 aa). The short motif at 272–276 is the MIDAS-like motif element; it reads DYSNS. The segment at 530 to 849 is disordered; sequence YGGGSADGDS…ETGDKSENTN (320 aa). The span at 545–555 shows a compositional bias: pro residues; that stretch reads DPTPGPPVDPE. Acidic residues predominate over residues 556 to 801; it reads PSPDPEPEPT…SDSDSDSDSD (246 aa). The span at 805–816 shows a compositional bias: polar residues; it reads RVTPPNNEQKAP. Residues 833–846 are compositionally biased toward basic and acidic residues; it reads HKTDALPETGDKSE. Positions 838–842 match the LPXTG sorting signal motif; it reads LPETG. Threonine 841 carries the pentaglycyl murein peptidoglycan amidated threonine modification. Positions 842–877 are cleaved as a propeptide — removed by sortase; the sequence is GDKSENTNATLFGAMMALLGSLLLFRKRKQDHKEKA.

This sequence belongs to the serine-aspartate repeat-containing protein (SDr) family. Post-translationally, proteolytically cleaved by aureolysin (aur). This cleavage leads to the inactivation of ClfB.

The protein resides in the secreted. Its subcellular location is the cell wall. In terms of biological role, cell surface-associated protein implicated in virulence by promoting bacterial attachment to both alpha- and beta-chains of human fibrinogen and inducing the formation of bacterial clumps. Partly responsible for mediating bacterial attachment to the highly keratinized squamous epithelial cells from the nasal cavity via an interaction with cytokeratin K10 (K10). Also promotes bacterial attachment to cultured keratinocytes, possibly through an interaction with cytokeratin K10. Binds mouse cytokeratin K10. Activates human platelet aggregation. The polypeptide is Clumping factor B (clfB) (Staphylococcus aureus (strain NCTC 8325 / PS 47)).